The chain runs to 327 residues: Tagatose 1,6-diphosphate aldolase 2 (327 aa).

Belongs to the aldolase LacD family.

It catalyses the reaction D-tagatofuranose 1,6-bisphosphate = D-glyceraldehyde 3-phosphate + dihydroxyacetone phosphate. The protein operates within carbohydrate metabolism; D-tagatose 6-phosphate degradation; D-glyceraldehyde 3-phosphate and glycerone phosphate from D-tagatose 6-phosphate: step 2/2. The sequence is that of Tagatose 1,6-diphosphate aldolase 2 from Streptococcus pyogenes serotype M6 (strain ATCC BAA-946 / MGAS10394).